Consider the following 100-residue polypeptide: Small ribosomal subunit protein uS14c (100 aa).

It belongs to the universal ribosomal protein uS14 family. As to quaternary structure, component of the chloroplast small ribosomal subunit (SSU). Mature 70S chloroplast ribosomes of higher plants consist of a small (30S) and a large (50S) subunit. The 30S small subunit contains 1 molecule of ribosomal RNA (16S rRNA) and 24 different proteins. The 50S large subunit contains 3 rRNA molecules (23S, 5S and 4.5S rRNA) and 33 different proteins.

The protein resides in the plastid. It is found in the chloroplast. In terms of biological role, component of the chloroplast ribosome (chloro-ribosome), a dedicated translation machinery responsible for the synthesis of chloroplast genome-encoded proteins, including proteins of the transcription and translation machinery and components of the photosynthetic apparatus. This Spinacia oleracea (Spinach) protein is Small ribosomal subunit protein uS14c.